Reading from the N-terminus, the 160-residue chain is Anaerobic nitrite reductase Glb1-1 (160 aa).

Residues 8–157 (GFTEEQEALV…LVNAIKSEMK (150 aa)) form the Globin domain. The Homodimerization signature appears at 41 to 45 (EIAPS). Residues serine 51, lysine 65, histidine 69, lysine 99, and histidine 104 each contribute to the heme b site. The short motif at 111 to 123 (DEHFEVTKFALLE) is the Homodimerization element.

It belongs to the plant globin family. As to quaternary structure, homodimer. Requires heme b as cofactor.

The enzyme catalyses Fe(III)-heme b-[protein] + nitric oxide + H2O = Fe(II)-heme b-[protein] + nitrite + 2 H(+). In terms of biological role, phytoglobin that reduces nitrite to nitric oxide (NO) under anoxic conditions (e.g. during flooding or in waterlogged soil) and upon root nodulation. Required for general plant development and during nodulation, especially for the onset of symbiosis. Monitors nitric oxide (NO) levels during early phase of the nitrogen-fixing symbiosis and buffers oxygen in functioning nodules. May not function as an oxygen storage or transport protein. Has an unusually high affinity for O(2) through a hexacoordinate heme iron because of a very low dissociation constant. The sequence is that of Anaerobic nitrite reductase Glb1-1 from Medicago truncatula (Barrel medic).